Reading from the N-terminus, the 475-residue chain is Ubiquilin-like protein (475 aa).

Residues 31-105 (TRVIVKTAGN…IYLVIKSKQG (75 aa)) form the Ubiquitin-like domain. 2 disordered regions span residues 113-138 (FRDL…VHQP) and 305-325 (QVQS…QLTQ). Over residues 129–138 (KGNSSRVHQP) the composition is skewed to polar residues.

This Homo sapiens (Human) protein is Ubiquilin-like protein (UBQLNL).